A 190-amino-acid chain; its full sequence is Putative histone H1.6 (190 aa).

The disordered stretch occupies residues 1-29 (MSDVAVAETPAVKTPTKAPKANATKVPKV). Position 2 is an N-acetylserine (serine 2). Low complexity predominate over residues 9 to 29 (TPAVKTPTKAPKANATKVPKV). Positions 34–110 (AHPPFINMVT…GATGRFRVAE (77 aa)) constitute an H15 domain. Residues 141–190 (KKTGDKVKKAKSPKKIAKPAAKKATKSPSKKVAPKKAAAKPAKKTAALKA) form a disordered region. Over residues 148–183 (KKAKSPKKIAKPAAKKATKSPSKKVAPKKAAAKPAK) the composition is skewed to basic residues.

The protein belongs to the histone H1/H5 family.

It is found in the nucleus. Its subcellular location is the chromosome. Histones H1 are necessary for the condensation of nucleosome chains into higher-order structures. This chain is Putative histone H1.6 (hil-6), found in Caenorhabditis elegans.